The chain runs to 76 residues: Conotoxin VnMSGL-0112 (76 aa).

The N-terminal stretch at 1-20 is a signal peptide; the sequence is MSGLGIMVLTLLLLVSMATS. The propeptide occupies 21 to 45; that stretch reads HQDGRGKQATQRDAINVRRRRSITR. Cystine bridges form between Cys-49-Cys-61, Cys-53-Cys-70, and Cys-60-Cys-74.

It belongs to the conotoxin O3 superfamily. In terms of tissue distribution, expressed by the venom duct.

The protein resides in the secreted. The protein is Conotoxin VnMSGL-0112 of Conus ventricosus (Mediterranean cone).